The chain runs to 97 residues: RNA-binding protein Hfq (97 aa).

The Sm domain maps to 10–70 (DPFLNALRKE…ISTIVPARSV (61 aa)).

This sequence belongs to the Hfq family. In terms of assembly, homohexamer.

Functionally, RNA chaperone that binds small regulatory RNA (sRNAs) and mRNAs to facilitate mRNA translational regulation in response to envelope stress, environmental stress and changes in metabolite concentrations. Also binds with high specificity to tRNAs. This chain is RNA-binding protein Hfq, found in Neisseria gonorrhoeae (strain ATCC 700825 / FA 1090).